A 389-amino-acid polypeptide reads, in one-letter code: Chalcone synthase 4-2 (389 aa).

Cys-164 is a catalytic residue.

Belongs to the thiolase-like superfamily. Chalcone/stilbene synthases family.

It catalyses the reaction (E)-4-coumaroyl-CoA + 3 malonyl-CoA + 3 H(+) = 2',4,4',6'-tetrahydroxychalcone + 3 CO2 + 4 CoA. Its pathway is secondary metabolite biosynthesis; flavonoid biosynthesis. The primary product of this enzyme is 4,2',4',6'-tetrahydroxychalcone (also termed naringenin-chalcone or chalcone) which can under specific conditions spontaneously isomerize into naringenin. This chain is Chalcone synthase 4-2 (CHS4-2), found in Medicago sativa (Alfalfa).